Reading from the N-terminus, the 315-residue chain is MTNDFHHITVLLHETVDMLDIKPDGIYVDATLGGAGHSEYLLSQLGPDGHLYAFDQDQKAIDNAHIRLKKYVDTGQVTFIKDNFRNLSSNLKALGVSEINGICYDLGVSSPQLDERERGFSYKQDAPLDMRMNREQSLTAYDVVNTYSYHDLVRIFFKYGEDKFSKQIARKIEQVRAEKPISTTTELAEIIKSSKSAKELKKKGHPAKQIFQAIRIEVNDELGAADESIQQAMDLLAVDGRISVITFHSLEDRLTKQLFKEASTVEVPKGLPFIPDDLQPKMELVNRKPILPSQEELEANNRAHSAKLRVARRIR.

Residues 35–37 (AGH), aspartate 55, phenylalanine 84, aspartate 105, and glutamine 112 contribute to the S-adenosyl-L-methionine site.

The protein belongs to the methyltransferase superfamily. RsmH family.

The protein resides in the cytoplasm. It catalyses the reaction cytidine(1402) in 16S rRNA + S-adenosyl-L-methionine = N(4)-methylcytidine(1402) in 16S rRNA + S-adenosyl-L-homocysteine + H(+). In terms of biological role, specifically methylates the N4 position of cytidine in position 1402 (C1402) of 16S rRNA. The chain is Ribosomal RNA small subunit methyltransferase H from Streptococcus agalactiae serotype III (strain NEM316).